Reading from the N-terminus, the 150-residue chain is Arginine repressor (150 aa).

This sequence belongs to the ArgR family.

The protein localises to the cytoplasm. The protein operates within amino-acid biosynthesis; L-arginine biosynthesis [regulation]. In terms of biological role, regulates arginine biosynthesis genes. This chain is Arginine repressor, found in Staphylococcus haemolyticus (strain JCSC1435).